Consider the following 827-residue polypeptide: SH3-containing GRB2-like protein 3-interacting protein 1 (827 aa).

3 disordered regions span residues 1–115 (MMEG…ESHK), 142–205 (SIGN…GPPL), and 223–278 (IWGS…QAAT). Basic and acidic residues-rich tracts occupy residues 16-32 (RKKE…DRDG) and 40-54 (PPYH…EGGK). Phosphoserine occurs at positions 78, 104, 105, 107, 149, 151, 156, and 169. Residues threonine 180 and threonine 182 each carry the phosphothreonine modification. Residue serine 236 is modified to Phosphoserine. Residues 245–260 (TGTPPPLPPKAVPATP) are compositionally biased toward pro residues. Phosphothreonine occurs at positions 247 and 259. 6 positions are modified to phosphoserine: serine 265, serine 287, serine 289, serine 300, serine 316, and serine 319. Polar residues predominate over residues 265-276 (SPLTVATGNDQA). The span at 314–333 (HFSDASPEHVTPELTPREKV) shows a compositional bias: basic and acidic residues. A disordered region spans residues 314-523 (HFSDASPEHV…LSAATTPTVE (210 aa)). Phosphothreonine is present on residues threonine 324, threonine 328, and threonine 335. Over residues 336–345 (PPAASDIPAD) the composition is skewed to low complexity. Residues 346-369 (SPAPGPPGPPGSAGPPGPPGPRHV) show a composition bias toward pro residues. Residue serine 371 is modified to Phosphoserine. The span at 377–392 (EVQKKVAEQTFIKDDY) shows a compositional bias: basic and acidic residues. Serine 398 carries the post-translational modification Phosphoserine. Phosphothreonine is present on threonine 409. Residues 436–455 (ASGASSPARPATPLVPCSST) show a composition bias toward low complexity. The segment covering 456–474 (TPPPPPPRPPSRPKLPPGK) has biased composition (pro residues). 2 stretches are compositionally biased toward low complexity: residues 481–491 (SRPFSPPIHSS) and 498–521 (PLAR…TTPT). Serine 485 is subject to Phosphoserine. The 269-residue stretch at 558–826 (TLPVAAAFTE…RFAAGKYLAD (269 aa)) folds into the MHD domain. Interaction with DPF motifs-containing proteins regions lie at residues 560–566 (PVAAAFT), 592–594 (SFP), 666–669 (TYYN), and 812–817 (SLIKKR). The necessary and sufficient to mediate interaction with CANX stretch occupies residues 648–827 (MPNLMTHLKK…FAAGKYLADN (180 aa)).

As to quaternary structure, interacts with proteins essential or regulating the formation of functional clathrin-coated pits. Interacts with CANX. Interacts with AP2A1. Interacts with EPS15. Interacts with SH3GL3. Interacts with AMPH. Interacts with ITSN1 (via SH3 domains). Interacts with and REPS1. Specifically expressed in brain (at protein level).

It localises to the membrane. The protein resides in the clathrin-coated pit. In terms of biological role, may function in clathrin-mediated endocytosis. Has both a membrane binding/tubulating activity and the ability to recruit proteins essential to the formation of functional clathrin-coated pits. Has a preference for membranes enriched in phosphatidylserine and phosphoinositides and is required for the endocytosis of the transferrin receptor. May also bind tubulin. May play a role in the regulation of energy homeostasis. This chain is SH3-containing GRB2-like protein 3-interacting protein 1 (Sgip1), found in Rattus norvegicus (Rat).